Here is a 971-residue protein sequence, read N- to C-terminus: GEM-interacting protein (971 aa).

A Phosphoserine modification is found at Ser19. 3 disordered regions span residues 41–79, 231–267, and 383–476; these read AGDPVRREDLEPDKADTATVVTEENSEASSWRDLSPEGP, LRARSQGSPEDPPSQASPGSNKQQERRRRSREEAQAK, and DTKK…IENG. Basic and acidic residues predominate over residues 44-56; that stretch reads PVRREDLEPDKAD. The span at 59–69 shows a compositional bias: polar residues; that stretch reads TVVTEENSEAS. 6 positions are modified to phosphoserine: Ser75, Ser235, Ser238, Ser247, Ser436, and Ser440. The 264-residue stretch at 85–348 folds into the F-BAR domain; sequence EELDLRLIRT…CCVPFEPGQR (264 aa). Positions 458–471 are enriched in acidic residues; it reads SSDDFEERDPDLGD. The segment at 492 to 536 adopts a Phorbol-ester/DAG-type zinc-finger fold; it reads THRLRRLRGPAKCRECEAFMVSGTECEECFLTCHKRCLETLLILC. The Rho-GAP domain maps to 553–756; that stretch reads LQLPRDFPEE…FLIVHYEQIF (204 aa). Position 659 is a phosphothreonine (Thr659). The disordered stretch occupies residues 799–865; sequence IALDSSPDPK…LGAQSRGHFS (67 aa). The segment covering 805-817 has biased composition (basic and acidic residues); the sequence is PDPKHHSALEKCP. Phosphoserine is present on residues Ser884, Ser908, and Ser924.

As to quaternary structure, interacts with GEM through its N-terminal.

In terms of biological role, stimulates, in vitro and in vivo, the GTPase activity of RhoA. In Mus musculus (Mouse), this protein is GEM-interacting protein (Gmip).